A 134-amino-acid polypeptide reads, in one-letter code: Small ribosomal subunit protein bS6 (134 aa).

Belongs to the bacterial ribosomal protein bS6 family.

Its function is as follows. Binds together with bS18 to 16S ribosomal RNA. This is Small ribosomal subunit protein bS6 from Pelodictyon phaeoclathratiforme (strain DSM 5477 / BU-1).